An 861-amino-acid chain; its full sequence is Probable linoleate 9S-lipoxygenase 7 (861 aa).

The region spanning 29–160 (NVLDFTDLAG…NYKSDRIFFA (132 aa)) is the PLAT domain. The 699-residue stretch at 163–861 (PYLPSETPEL…GKGIPNSVSI (699 aa)) folds into the Lipoxygenase domain. The segment at 220 to 246 (TLGGSAEYPYPRRGRTGRPPTRTDPKS) is disordered. Positions 522, 527, 713, 717, and 861 each coordinate Fe cation.

It belongs to the lipoxygenase family. Monomer. Requires Fe cation as cofactor. Expressed in tubers. Detected in sprouts and flowers. but not in leaves or stems.

It localises to the cytoplasm. The catalysed reaction is (9Z,12Z)-octadecadienoate + O2 = (9S)-hydroperoxy-(10E,12Z)-octadecadienoate. Its pathway is lipid metabolism; oxylipin biosynthesis. Functionally, plant lipoxygenases may be involved in a number of diverse aspects of plant physiology including growth and development, pest resistance, and senescence or responses to wounding. Catalyzes the hydroperoxidation of lipids containing a cis,cis-1,4-pentadiene structure. This Solanum tuberosum (Potato) protein is Probable linoleate 9S-lipoxygenase 7 (LOX1.7).